The primary structure comprises 504 residues: Zinc finger CCCH domain-containing protein 18 (504 aa).

Residues 40–69 (SNADLLEVHEELLAAIKDAEEGLLHLKRSR) adopt a coiled-coil conformation. Residues 77–105 (IFPNQEPTSEAPEVAVDPPDDVEPEPLEP) form a disordered region. Positions 94–104 (PPDDVEPEPLE) are enriched in acidic residues. The segment at 146-173 (SENMSMCKFFLQQRCRFGSNCRLSHGIV) adopts a C3H1-type zinc-finger fold. Residues 230 to 276 (GSSARLPSDSLSISEYADESDEDGEGSSSDEGSDFSEDGDQEDESVH) form a disordered region. 2 stretches are compositionally biased toward acidic residues: residues 245-254 (YADESDEDGE) and 260-272 (EGSD…DQED). The G-patch domain maps to 304–350 (TRGVASKMMAKMGYREGMGLGVSGQGMLDPIPVKVLPPKQSLDHAVA). Disordered stretches follow at residues 351–390 (ASEV…EEER), 406–432 (AEGS…DRRS), and 482–504 (EATH…WLKF). The segment covering 361–374 (GKKRSRGGKRKREK) has biased composition (basic residues). 3 stretches are compositionally biased toward basic and acidic residues: residues 375 to 390 (KFAE…EEER), 413 to 432 (SKKD…DRRS), and 493 to 504 (ARKEKEKKWLKF). Residues 430–500 (RRSLLAYDDE…AVARKEKEKK (71 aa)) adopt a coiled-coil conformation.

The sequence is that of Zinc finger CCCH domain-containing protein 18 from Oryza sativa subsp. japonica (Rice).